Consider the following 704-residue polypeptide: Probable serine/threonine-protein kinase WNK1 (704 aa).

The 258-residue stretch at 27–284 folds into the Protein kinase domain; it reads GRYNDVLGKG…ARELLKDPFL (258 aa). ATP is bound by residues 107 to 110 and K157; that span reads TEMF. D174 (proton acceptor) is an active-site residue. Residues 499 to 521 are disordered; it reads QTDLQDSGGSSDDGGGQTQHVKD.

It belongs to the protein kinase superfamily. Ser/Thr protein kinase family. WNK subfamily.

The catalysed reaction is L-seryl-[protein] + ATP = O-phospho-L-seryl-[protein] + ADP + H(+). The enzyme catalyses L-threonyl-[protein] + ATP = O-phospho-L-threonyl-[protein] + ADP + H(+). The chain is Probable serine/threonine-protein kinase WNK1 (WNK1) from Oryza sativa subsp. japonica (Rice).